A 495-amino-acid chain; its full sequence is N-succinylglutamate 5-semialdehyde dehydrogenase (495 aa).

An NAD(+)-binding site is contributed by 228–233 (GSYATG). Active-site residues include E251 and C285.

The protein belongs to the aldehyde dehydrogenase family. AstD subfamily.

It carries out the reaction N-succinyl-L-glutamate 5-semialdehyde + NAD(+) + H2O = N-succinyl-L-glutamate + NADH + 2 H(+). The protein operates within amino-acid degradation; L-arginine degradation via AST pathway; L-glutamate and succinate from L-arginine: step 4/5. Its function is as follows. Catalyzes the NAD-dependent reduction of succinylglutamate semialdehyde into succinylglutamate. In Legionella pneumophila (strain Paris), this protein is N-succinylglutamate 5-semialdehyde dehydrogenase.